A 424-amino-acid polypeptide reads, in one-letter code: Folate-like transporter 3 (424 aa).

An N-linked (GlcNAc...) asparagine glycan is attached at Asn35. 5 consecutive transmembrane segments (helical) span residues 55–75 (VALI…ILII), 78–98 (LSYF…CMQL), 101–119 (LFYG…YIYV), 136–156 (ALLV…GLNW), and 164–184 (IINL…PHVP). N-linked (GlcNAc...) asparagine glycosylation is present at Asn254. 3 helical membrane-spanning segments follow: residues 313-333 (GLLF…CYII), 361-381 (LFGI…AIVI), and 392-412 (FVVY…IFGI).

This sequence belongs to the reduced folate carrier (RFC) transporter (TC 2.A.48) family.

Its subcellular location is the membrane. The polypeptide is Folate-like transporter 3 (folt-3) (Caenorhabditis elegans).